The sequence spans 122 residues: Histone H2B, gonadal (122 aa).

A disordered region spans residues 1-31 (MPPKPSGKGQKKAGKAKGAPRTDKKRRRKRK). The residue at position 2 (P2) is a N,N-dimethylproline. S109 is a glycosylation site (O-linked (GlcNAc) serine). Residue K117 forms a Glycyl lysine isopeptide (Lys-Gly) (interchain with G-Cter in ubiquitin) linkage.

It belongs to the histone H2B family. As to quaternary structure, the nucleosome is a histone octamer containing two molecules each of H2A, H2B, H3 and H4 assembled in one H3-H4 heterotetramer and two H2A-H2B heterodimers. The octamer wraps approximately 147 bp of DNA. Post-translationally, monoubiquitination of Lys-117 gives a specific tag for epigenetic transcriptional activation and is also prerequisite for histone H3 'Lys-4' and 'Lys-79' methylation. GlcNAcylation at Ser-109 promotes monoubiquitination of Lys-117. It fluctuates in response to extracellular glucose, and associates with transcribed genes.

It is found in the nucleus. It localises to the chromosome. Its function is as follows. Core component of nucleosome. Nucleosomes wrap and compact DNA into chromatin, limiting DNA accessibility to the cellular machineries which require DNA as a template. Histones thereby play a central role in transcription regulation, DNA repair, DNA replication and chromosomal stability. DNA accessibility is regulated via a complex set of post-translational modifications of histones, also called histone code, and nucleosome remodeling. The protein is Histone H2B, gonadal of Asterias rubens (Common European starfish).